The sequence spans 415 residues: Lipoyl synthase, mitochondrial (415 aa).

The N-terminal 32 residues, 1–32 (MAASTNRLRFLYSSARTVPQTGSITPISRRTY), are a transit peptide targeting the mitochondrion. The span at 22–32 (GSITPISRRTY) shows a compositional bias: polar residues. Positions 22–53 (GSITPISRRTYATTEPSPSATGAPATARKRTN) are disordered. Over residues 33 to 47 (ATTEPSPSATGAPAT) the composition is skewed to low complexity. [4Fe-4S] cluster is bound by residues Cys-132, Cys-137, Cys-143, Cys-163, Cys-167, Cys-170, and Ser-378. A Radical SAM core domain is found at 146–367 (GSDKSAATAT…RQRALDMGFL (222 aa)). The disordered stretch occupies residues 395-415 (AAGTAGESVTDSKAAVDEATR).

It belongs to the radical SAM superfamily. Lipoyl synthase family. Requires [4Fe-4S] cluster as cofactor.

The protein resides in the mitochondrion. The catalysed reaction is [[Fe-S] cluster scaffold protein carrying a second [4Fe-4S](2+) cluster] + N(6)-octanoyl-L-lysyl-[protein] + 2 oxidized [2Fe-2S]-[ferredoxin] + 2 S-adenosyl-L-methionine + 4 H(+) = [[Fe-S] cluster scaffold protein] + N(6)-[(R)-dihydrolipoyl]-L-lysyl-[protein] + 4 Fe(3+) + 2 hydrogen sulfide + 2 5'-deoxyadenosine + 2 L-methionine + 2 reduced [2Fe-2S]-[ferredoxin]. Its pathway is protein modification; protein lipoylation via endogenous pathway; protein N(6)-(lipoyl)lysine from octanoyl-[acyl-carrier-protein]: step 2/2. Its function is as follows. Catalyzes the radical-mediated insertion of two sulfur atoms into the C-6 and C-8 positions of the octanoyl moiety bound to the lipoyl domains of lipoate-dependent enzymes, thereby converting the octanoylated domains into lipoylated derivatives. This Aspergillus oryzae (strain ATCC 42149 / RIB 40) (Yellow koji mold) protein is Lipoyl synthase, mitochondrial.